The sequence spans 452 residues: Probable ECA polymerase (452 aa).

11 consecutive transmembrane segments (helical) span residues 6–26 (FSGL…LTWF), 37–57 (VFFS…TSVL), 63–83 (VGVA…CFYG), 118–138 (VILM…NGFL), 155–175 (GVAL…VYFL), 181–201 (AWLF…MIVG), 207–227 (IIIA…ISLW), 228–248 (MLAA…LKRY), 341–361 (LVVM…GLII), 378–398 (YKAA…IVLA), and 410–430 (VFFL…FWLF).

This sequence belongs to the WzyE family. As to quaternary structure, probably part of a complex composed of WzxE, WzyE and WzzE.

The protein resides in the cell inner membrane. It functions in the pathway bacterial outer membrane biogenesis; enterobacterial common antigen biosynthesis. Its function is as follows. Probably involved in the polymerization of enterobacterial common antigen (ECA) trisaccharide repeat units. This chain is Probable ECA polymerase, found in Salmonella typhi.